Here is a 347-residue protein sequence, read N- to C-terminus: MRALGAVVTLLLWGQLFAVELGNDATDIEDDSCPKPPEIANGYVEHLVRYRCRQFYKLQTEGDGIYTLNSEKQWVNPAAGDKLPKCEAVCGKPKHPVDQVQRIIGGSMDAKGSFPWQAKMISRHGLTTGATLISDQWLLTTAQNLFLNHSENATAKDIAPTLTLYVGKNQLVEIEKVVLHPERSVVDIGLIKLKQKVLVTEKVMPICLPSKDYVAPGRMGYVSGWGRNVNFRFTERLKYVMLPVADQEKCELHYEKSTVPEKKGAVSPVGVQPILNKHTFCAGLTKYEEDTCYGDAGSAFAVHDTEEDTWYAAGILSFDKSCAVAEYGVYVRATDLKDWVQETMAKN.

A signal peptide spans 1–18 (MRALGAVVTLLLWGQLFA). The Sushi domain occupies 31 to 88 (DSCPKPPEIANGYVEHLVRYRCRQFYKLQTEGDGIYTLNSEKQWVNPAAGDKLPKCEA). 4 disulfides stabilise this stretch: Cys52–Cys86, Cys90–Cys207, Cys250–Cys281, and Cys292–Cys322. Residues 103–345 (IIGGSMDAKG…LKDWVQETMA (243 aa)) form the Peptidase S1 domain. Residues Asn148 and Asn152 are each glycosylated (N-linked (GlcNAc...) asparagine). The interaction with CD163 stretch occupies residues 259–264 (VPEKKG).

This sequence belongs to the peptidase S1 family. In terms of assembly, tetramer of two alpha and two beta chains; disulfide-linked. The hemoglobin/haptoglobin complex is composed of a haptoglobin dimer bound to two hemoglobin alpha-beta dimers. Interacts with CD163. Interacts with ERGIC3. In terms of tissue distribution, expressed by the liver and secreted in plasma.

The protein resides in the secreted. In terms of biological role, as a result of hemolysis, hemoglobin is found to accumulate in the kidney and is secreted in the urine. Haptoglobin captures, and combines with free plasma hemoglobin to allow hepatic recycling of heme iron and to prevent kidney damage. Haptoglobin also acts as an antioxidant, has antibacterial activity and plays a role in modulating many aspects of the acute phase response. Hemoglobin/haptoglobin complexes are rapidly cleared by the macrophage CD163 scavenger receptor expressed on the surface of liver Kupfer cells through an endocytic lysosomal degradation pathway. The chain is Haptoglobin (Hp) from Rattus norvegicus (Rat).